The chain runs to 417 residues: Sterile alpha motif domain-containing protein 14 (417 aa).

Residues Gln-36–Ser-302 form a disordered region. Residues Lys-40–Ser-49 show a composition bias toward basic residues. Residues Ser-84 and Ser-108 each carry the phosphoserine modification. The span at Ser-138 to Ser-153 shows a compositional bias: low complexity. Basic and acidic residues predominate over residues Pro-159–Ser-173. Ser-173 and Ser-179 each carry phosphoserine. 2 stretches are compositionally biased toward low complexity: residues Ser-244 to Ser-260 and Ser-276 to Pro-289. The residue at position 279 (Ser-279) is a Phosphoserine. Thr-283 is subject to Phosphothreonine. Positions Trp-326–Ala-389 constitute an SAM domain. Residues Asp-375–Lys-416 adopt a coiled-coil conformation. The interval Ala-390 to Ser-417 is disordered.

In Mus musculus (Mouse), this protein is Sterile alpha motif domain-containing protein 14 (Samd14).